The sequence spans 352 residues: C-glycoside deglycosidase alpha subunit (352 aa).

A Mn(2+)-binding site is contributed by E147. Catalysis depends on H149, which acts as the Proton acceptor. Residues D179, H269, and E305 each coordinate Mn(2+).

It belongs to the C-glycoside deglycosidase alpha subunit family. In terms of assembly, heterodimer composed of an alpha subunit (CarB2) and a beta subunit (CarC2). A divalent metal cation is required as a cofactor.

The enzyme catalyses 3''-dehydroorientin = 1,5-anhydro-D-erythro-hex-1-en-3-ulose + luteolin. Its activity is regulated as follows. Activity is strongly reduced in the presence of chelating agents. Functionally, carbon-carbon bond-cleaving enzyme which participates in the metabolism of C-glycosides. Acts on the C8-glycosylated compound 3''-dehydroorientin (3''-oxo-orientin). This is C-glycoside deglycosidase alpha subunit from Arthrobacter globiformis (strain ATCC 8010 / DSM 20124 / JCM 1332 / NBRC 12137 / NCIMB 8907 / NRRL B-2979 / 168).